The sequence spans 432 residues: CBL-interacting serine/threonine-protein kinase 17 (432 aa).

Residues Tyr11–Phe266 form the Protein kinase domain. ATP is bound by residues Leu17–Val25 and Lys40. The active-site Proton acceptor is Asp134. The segment at Asp152–Glu181 is activation loop. A Phosphoserine modification is found at Ser156. Thr170 bears the Phosphothreonine mark. The NAF domain occupies Asp301 to Glu325. Positions Glu331–Leu360 are PPI.

Belongs to the protein kinase superfamily. CAMK Ser/Thr protein kinase family. SNF1 subfamily. In terms of assembly, interacts with CBL1. It depends on Mn(2+) as a cofactor.

The enzyme catalyses L-seryl-[protein] + ATP = O-phospho-L-seryl-[protein] + ADP + H(+). It catalyses the reaction L-threonyl-[protein] + ATP = O-phospho-L-threonyl-[protein] + ADP + H(+). Its function is as follows. CIPK serine-threonine protein kinases interact with CBL proteins. Binding of a CBL protein to the regulatory NAF domain of CIPK protein lead to the activation of the kinase in a calcium-dependent manner. The protein is CBL-interacting serine/threonine-protein kinase 17 (CIPK17) of Arabidopsis thaliana (Mouse-ear cress).